The following is a 273-amino-acid chain: Sulfur carrier protein FdhD (273 aa).

C124 functions as the Cysteine persulfide intermediate in the catalytic mechanism. 263–268 (FCRQSR) lines the Mo-bis(molybdopterin guanine dinucleotide) pocket.

This sequence belongs to the FdhD family.

The protein resides in the cytoplasm. Required for formate dehydrogenase (FDH) activity. Acts as a sulfur carrier protein that transfers sulfur from IscS to the molybdenum cofactor prior to its insertion into FDH. This Acinetobacter baylyi (strain ATCC 33305 / BD413 / ADP1) protein is Sulfur carrier protein FdhD.